A 153-amino-acid polypeptide reads, in one-letter code: Conglutin delta 2 (153 aa).

The N-terminal stretch at 1-22 (MAKLTILIALVAALVLVVHTSA) is a signal peptide. Disulfide bonds link cysteine 30–cysteine 102, cysteine 42–cysteine 90, cysteine 91–cysteine 138, and cysteine 104–cysteine 146.

This sequence belongs to the 2S seed storage albumins family. Heterodimer of a small chain and a large chain; disulfide-linked. Expressed in developing cotyledons (at protein level).

It localises to the endoplasmic reticulum. This chain is Conglutin delta 2, found in Lupinus angustifolius (Narrow-leaved blue lupine).